We begin with the raw amino-acid sequence, 448 residues long: tRNA-2-methylthio-N(6)-dimethylallyladenosine synthase (448 aa).

Residues 3–118 form the MTTase N-terminal domain; that stretch reads KKVFIKTFGC…LPELLNARAA (116 aa). Residues Cys12, Cys49, Cys81, Cys155, Cys159, and Cys162 each contribute to the [4Fe-4S] cluster site. Residues 141–374 enclose the Radical SAM core domain; that stretch reads RVEGASAFVS…QAVINRNILE (234 aa). A TRAM domain is found at 377 to 440; the sequence is QERVGTVQRL…TYTLRGEVVM (64 aa).

The protein belongs to the methylthiotransferase family. MiaB subfamily. Monomer. [4Fe-4S] cluster is required as a cofactor.

The protein resides in the cytoplasm. It carries out the reaction N(6)-dimethylallyladenosine(37) in tRNA + (sulfur carrier)-SH + AH2 + 2 S-adenosyl-L-methionine = 2-methylsulfanyl-N(6)-dimethylallyladenosine(37) in tRNA + (sulfur carrier)-H + 5'-deoxyadenosine + L-methionine + A + S-adenosyl-L-homocysteine + 2 H(+). In terms of biological role, catalyzes the methylthiolation of N6-(dimethylallyl)adenosine (i(6)A), leading to the formation of 2-methylthio-N6-(dimethylallyl)adenosine (ms(2)i(6)A) at position 37 in tRNAs that read codons beginning with uridine. In Acidovorax sp. (strain JS42), this protein is tRNA-2-methylthio-N(6)-dimethylallyladenosine synthase.